Here is a 295-residue protein sequence, read N- to C-terminus: Hepatic leukemia factor (295 aa).

Residues 36-52 (PEDAFSKEKDKGKKLDD) are compositionally biased toward basic and acidic residues. Disordered stretches follow at residues 36–76 (PEDA…TLPY) and 92–149 (LSEN…SPIR). The 64-residue stretch at 225–288 (DDKYWARRRK…GKCKNILAKY (64 aa)) folds into the bZIP domain. The segment at 227-247 (KYWARRRKNNMAAKRSRDARR) is basic motif. The interval 248–255 (LKENQIAI) is leucine-zipper.

The protein belongs to the bZIP family. PAR subfamily. Binds DNA specifically as homodimer or heterodimer with other PAR factors.

The protein resides in the nucleus. This is Hepatic leukemia factor (Hlf) from Mus musculus (Mouse).